The following is a 204-amino-acid chain: Large ribosomal subunit protein bL25 (204 aa).

The segment at 1–20 is disordered; it reads MSETYELKAETRDRVGKGSS.

The protein belongs to the bacterial ribosomal protein bL25 family. CTC subfamily. In terms of assembly, part of the 50S ribosomal subunit; part of the 5S rRNA/L5/L18/L25 subcomplex. Contacts the 5S rRNA. Binds to the 5S rRNA independently of L5 and L18.

In terms of biological role, this is one of the proteins that binds to the 5S RNA in the ribosome where it forms part of the central protuberance. This chain is Large ribosomal subunit protein bL25, found in Rhizobium meliloti (strain 1021) (Ensifer meliloti).